We begin with the raw amino-acid sequence, 144 residues long: Large ribosomal subunit protein uL15 (144 aa).

The segment at 1–53 (MRLNTLSPAEGAKHSAKRLGRGIGSGLGKTGGRGHKGQKSRTGGGVRRGFEGG) is disordered. The span at 21-31 (RGIGSGLGKTG) shows a compositional bias: gly residues.

The protein belongs to the universal ribosomal protein uL15 family. As to quaternary structure, part of the 50S ribosomal subunit.

In terms of biological role, binds to the 23S rRNA. This chain is Large ribosomal subunit protein uL15, found in Pasteurella multocida (strain Pm70).